The primary structure comprises 173 residues: MIDCDGYRPNVGIILSNQERRLFWAKRIGQQAWQFPQGGIRRDESPLDAMYRELAEETGLGPEHVEVIGKTRDWLRYRLPKHLIRRHSNPVCIGQKQIWFMLRLVGDETCVRLDSVQPAEFDSWRWVDYWRPMREVVFFKRHVYRRALRELAPLLFPEGMPGQQRQPRTRSGA.

The Nudix hydrolase domain maps to 6 to 149 (GYRPNVGIIL…KRHVYRRALR (144 aa)). The Nudix box signature appears at 38–59 (GGIRRDESPLDAMYRELAEETG).

This sequence belongs to the Nudix hydrolase family. RppH subfamily. It depends on a divalent metal cation as a cofactor.

In terms of biological role, accelerates the degradation of transcripts by removing pyrophosphate from the 5'-end of triphosphorylated RNA, leading to a more labile monophosphorylated state that can stimulate subsequent ribonuclease cleavage. The polypeptide is RNA pyrophosphohydrolase (Thioalkalivibrio sulfidiphilus (strain HL-EbGR7)).